A 382-amino-acid chain; its full sequence is Lipid-A-disaccharide synthase (382 aa).

This sequence belongs to the LpxB family.

It catalyses the reaction 2-N,3-O-bis[(3R)-3-hydroxytetradecanoyl]-alpha-D-glucosaminyl 1-phosphate + UDP-2-N,3-O-bis[(3R)-3-hydroxytetradecanoyl]-alpha-D-glucosamine = lipid A disaccharide (E. coli) + UDP + H(+). It carries out the reaction a lipid X + a UDP-2-N,3-O-bis[(3R)-3-hydroxyacyl]-alpha-D-glucosamine = a lipid A disaccharide + UDP + H(+). Its pathway is glycolipid biosynthesis; lipid IV(A) biosynthesis; lipid IV(A) from (3R)-3-hydroxytetradecanoyl-[acyl-carrier-protein] and UDP-N-acetyl-alpha-D-glucosamine: step 5/6. In terms of biological role, condensation of UDP-2,3-diacylglucosamine and 2,3-diacylglucosamine-1-phosphate to form lipid A disaccharide, a precursor of lipid A, a phosphorylated glycolipid that anchors the lipopolysaccharide to the outer membrane of the cell. The protein is Lipid-A-disaccharide synthase of Salmonella agona (strain SL483).